A 214-amino-acid polypeptide reads, in one-letter code: Phosphatidylserine decarboxylase proenzyme (214 aa).

The active-site Schiff-base intermediate with substrate; via pyruvic acid is Ser-182. Ser-182 is subject to Pyruvic acid (Ser); by autocatalysis.

The protein belongs to the phosphatidylserine decarboxylase family. PSD-A subfamily. In terms of assembly, heterodimer of a large membrane-associated beta subunit and a small pyruvoyl-containing alpha subunit. Pyruvate is required as a cofactor. Is synthesized initially as an inactive proenzyme. Formation of the active enzyme involves a self-maturation process in which the active site pyruvoyl group is generated from an internal serine residue via an autocatalytic post-translational modification. Two non-identical subunits are generated from the proenzyme in this reaction, and the pyruvate is formed at the N-terminus of the alpha chain, which is derived from the carboxyl end of the proenzyme. The post-translation cleavage follows an unusual pathway, termed non-hydrolytic serinolysis, in which the side chain hydroxyl group of the serine supplies its oxygen atom to form the C-terminus of the beta chain, while the remainder of the serine residue undergoes an oxidative deamination to produce ammonia and the pyruvoyl prosthetic group on the alpha chain.

It is found in the cell membrane. The enzyme catalyses a 1,2-diacyl-sn-glycero-3-phospho-L-serine + H(+) = a 1,2-diacyl-sn-glycero-3-phosphoethanolamine + CO2. Its pathway is phospholipid metabolism; phosphatidylethanolamine biosynthesis; phosphatidylethanolamine from CDP-diacylglycerol: step 2/2. Catalyzes the formation of phosphatidylethanolamine (PtdEtn) from phosphatidylserine (PtdSer). This Burkholderia ambifaria (strain MC40-6) protein is Phosphatidylserine decarboxylase proenzyme.